A 960-amino-acid chain; its full sequence is Protein mono-ADP-ribosyltransferase PARP10 (960 aa).

At Glu103 the chain carries ADP-ribosyl glutamic acid. The span at Ser325 to Leu341 shows a compositional bias: polar residues. Residues Ser325–Gly346 are disordered. 2 positions are modified to phosphoserine: Ser381 and Ser388. The tract at residues Ser553–Thr576 is disordered. The span at His555–Pro570 shows a compositional bias: basic and acidic residues. Positions Leu604–Gln621 match the Ubiquitin-interacting motif. Ser617 is modified (phosphoserine). Residues Asp649 to Cys856 are myc binding. One can recognise a PARP catalytic domain in the interval Pro755–Pro960. Positions Gln780–Tyr787 match the PIP-box motif. Glu831 carries the post-translational modification ADP-ribosyl glutamic acid.

It belongs to the ARTD/PARP family. Interacts with MYC. Interacts with PARP14. Interacts (via-PIP box and ubiquitin-interacting motifs) with PCNA. In terms of processing, stimulated through its phosphorylation by CDK2. Acquires CDK-dependent phosphorylation through late-G1 to S phase, and from prometaphase to cytokinesis in the nucleolar organizing regions. Phosphorylation is suppressed in growth-arrested cells. Post-translationally, auto-mono-ADP-ribosylated on glutamate and lysine residues.

The protein resides in the cytoplasm. Its subcellular location is the nucleus. The enzyme catalyses L-lysyl-[protein] + NAD(+) = N(6)-(ADP-D-ribosyl)-L-lysyl-[protein] + nicotinamide + H(+). It catalyses the reaction L-aspartyl-[protein] + NAD(+) = 4-O-(ADP-D-ribosyl)-L-aspartyl-[protein] + nicotinamide. The catalysed reaction is L-glutamyl-[protein] + NAD(+) = 5-O-(ADP-D-ribosyl)-L-glutamyl-[protein] + nicotinamide. In terms of biological role, ADP-ribosyltransferase that mediates mono-ADP-ribosylation of glutamate and aspartate residues on target proteins. In contrast to PARP1 and PARP2, it is not able to mediate poly-ADP-ribosylation. Catalyzes mono-ADP-ribosylation of GSK3B, leading to negatively regulate GSK3B kinase activity. Involved in translesion DNA synthesis in response to DNA damage via its interaction with PCNA. The chain is Protein mono-ADP-ribosyltransferase PARP10 from Mus musculus (Mouse).